The primary structure comprises 446 residues: Glycerol-3-phosphate acyltransferase 3 (446 aa).

3 helical membrane-spanning segments follow: residues 11-31 (IFII…MFGS), 146-166 (LRVT…LLPL), and 168-188 (ITLA…VGQL). Positions 236-241 (HTSPID) match the HXXXXD motif motif.

This sequence belongs to the 1-acyl-sn-glycerol-3-phosphate acyltransferase family.

The protein resides in the endoplasmic reticulum membrane. The enzyme catalyses sn-glycerol 3-phosphate + an acyl-CoA = a 1-acyl-sn-glycero-3-phosphate + CoA. It catalyses the reaction a 1-acyl-sn-glycero-3-phosphate + an acyl-CoA = a 1,2-diacyl-sn-glycero-3-phosphate + CoA. The catalysed reaction is dodecanoyl-CoA + sn-glycerol 3-phosphate = 1-dodecanoyl-sn-glycerol 3-phosphate + CoA. It carries out the reaction sn-glycerol 3-phosphate + hexadecanoyl-CoA = 1-hexadecanoyl-sn-glycero-3-phosphate + CoA. The enzyme catalyses sn-glycerol 3-phosphate + (9Z)-octadecenoyl-CoA = 1-(9Z-octadecenoyl)-sn-glycero-3-phosphate + CoA. It catalyses the reaction (9Z,12Z)-octadecadienoyl-CoA + sn-glycerol 3-phosphate = 1-(9Z,12Z)-octadecadienoyl-sn-glycero-3-phosphate + CoA. The catalysed reaction is 1-tetradecanoyl-sn-glycerol 3-phosphate + (9Z)-octadecenoyl-CoA = 1-tetradecanoyl-2-(9Z)-octadecenoyl-sn-glycero-3-phosphate + CoA. It carries out the reaction 1-hexadecanoyl-sn-glycero-3-phosphate + (9Z)-octadecenoyl-CoA = 1-hexadecanoyl-2-(9Z-octadecenoyl)-sn-glycero-3-phosphate + CoA. The enzyme catalyses 1-(9Z-octadecenoyl)-sn-glycero-3-phosphate + (9Z)-octadecenoyl-CoA = 1,2-di-(9Z-octadecenoyl)-sn-glycero-3-phosphate + CoA. It catalyses the reaction 1-(6Z,9Z,12Z-octadecatrienoyl)-sn-glycero-3-phosphate + (9Z)-octadecenoyl-CoA = (6Z,9Z,12Z)-octadecatrienoyl-2-(9Z)-octadecenoyl-sn-glycero-3-phosphate + CoA. The catalysed reaction is 1-(9Z,12Z,15Z)-octadecatrienoyl-sn-glycero-3-phosphate + (9Z)-octadecenoyl-CoA = 1-(9Z,12Z,15Z)-octadecatrienoyl-2-(9Z)-octadecenoyl-sn-glycero-3-phosphate + CoA. It carries out the reaction 1-(9Z-octadecenoyl)-sn-glycero-3-phosphate + tetradecanoyl-CoA = 1-(9Z)-octadecenoyl-2-tetradecanoyl-sn-glycero-3-phosphate + CoA. The enzyme catalyses 1-(9Z-octadecenoyl)-sn-glycero-3-phosphate + hexadecanoyl-CoA = 1-(9Z)-octadecenoyl-2-hexadecanoyl-sn-glycero-3-phosphate + CoA. It catalyses the reaction 1-(9Z-octadecenoyl)-sn-glycero-3-phosphate + octadecanoyl-CoA = 1-(9Z-octadecenoyl)-2-octadecanoyl-sn-glycero-3-phosphate + CoA. The catalysed reaction is 1-(9Z-octadecenoyl)-sn-glycero-3-phosphate + (9Z,12Z)-octadecadienoyl-CoA = 1-(9Z)-octadecenoyl-2-(9Z,12Z)-octadecadienoyl-sn-glycero-3-phosphate + CoA. It carries out the reaction 1-(5Z,8Z,11Z,14Z-eicosatetraenoyl)-sn-glycero-3-phosphate + (9Z)-octadecenoyl-CoA = 1-(5Z,8Z,11Z,14Z)-eicosatetraenoyl-2-(9Z)-octadecenoyl-sn-glycero-3-phosphate + CoA. The protein operates within glycerolipid metabolism; triacylglycerol biosynthesis. It participates in phospholipid metabolism; CDP-diacylglycerol biosynthesis; CDP-diacylglycerol from sn-glycerol 3-phosphate: step 1/3. Its function is as follows. Converts glycerol-3-phosphate to 1-acyl-sn-glycerol-3-phosphate (lysophosphatidic acid or LPA) by incorporating an acyl moiety at the sn-1 position of the glycerol backbone. Also converts LPA into 1,2-diacyl-sn-glycerol-3-phosphate (phosphatidic acid or PA) by incorporating an acyl moiety at the sn-2 position of the glycerol backbone. Protects cells against lipotoxicity. This Xenopus laevis (African clawed frog) protein is Glycerol-3-phosphate acyltransferase 3.